Here is a 202-residue protein sequence, read N- to C-terminus: Tetranectin (202 aa).

Positions 1–21 are cleaved as a signal peptide; that stretch reads MELWGAYLLLCLFSLLTQVTT. Threonine 25 carries O-linked (GalNAc...) threonine glycosylation. Disulfide bonds link cysteine 71–cysteine 81, cysteine 98–cysteine 197, and cysteine 173–cysteine 189. In terms of domain architecture, C-type lectin spans 77–198; that stretch reads VHMKCFLAFT…CRDQLPYICQ (122 aa).

In terms of assembly, homotrimer. As to expression, found in plasma.

The protein localises to the secreted. Its function is as follows. Tetranectin binds to plasminogen and to isolated kringle 4. May be involved in the packaging of molecules destined for exocytosis. Plays a role in retinal function. The chain is Tetranectin (CLEC3B) from Homo sapiens (Human).